A 670-amino-acid polypeptide reads, in one-letter code: Penicillin-binding protein activator LpoA (670 aa).

An N-terminal signal peptide occupies residues Met1–Gly26. A lipid anchor (N-palmitoyl cysteine) is attached at Cys27. Cys27 carries S-diacylglycerol cysteine lipidation.

This sequence belongs to the LpoA family. In terms of assembly, interacts with PBP1a.

The protein localises to the cell outer membrane. Its function is as follows. Regulator of peptidoglycan synthesis that is essential for the function of penicillin-binding protein 1A (PBP1a). In Erwinia tasmaniensis (strain DSM 17950 / CFBP 7177 / CIP 109463 / NCPPB 4357 / Et1/99), this protein is Penicillin-binding protein activator LpoA.